Reading from the N-terminus, the 385-residue chain is Multidrug resistance protein MdtE (385 aa).

The signal sequence occupies residues 1–20 (MNRRRKLLIPLLFCGAMLTA). Cys21 carries the N-palmitoyl cysteine lipid modification. Cys21 is lipidated: S-diacylglycerol cysteine.

It belongs to the membrane fusion protein (MFP) (TC 8.A.1) family. In terms of assembly, homotrimer. Part of the tripartite efflux system MdtEF-TolC, which is composed of an inner membrane transporter, MdtF, a membrane fusion protein, MdtE, and an outer membrane component, TolC. The complex forms a large protein conduit and can translocate molecules across both the inner and outer membranes.

It localises to the cell inner membrane. Functionally, part of the tripartite efflux system MdtEF-TolC, which confers resistance to various compounds. The polypeptide is Multidrug resistance protein MdtE (mdtE) (Escherichia coli O6:H1 (strain CFT073 / ATCC 700928 / UPEC)).